The following is a 168-amino-acid chain: Putative gustatory receptor clone PTE03 (168 aa).

Topologically, residues 1-25 are extracellular; the sequence is TTVPKMLINLQKQNKAISYAGCITQ. A disulfide bridge connects residues Cys-22 and Cys-104. Residues 26 to 45 form a helical membrane-spanning segment; it reads LSFVLLFAGMENFLLAAMAY. Residues 46 to 67 are Cytoplasmic-facing; sequence DRYVAICKPLRYTAIMKAHLCL. Residues 68-88 traverse the membrane as a helical segment; that stretch reads VMTLLSLCISIVDALLHGLMI. The Extracellular portion of the chain corresponds to 89-121; the sequence is LRLSFCTFLEIPHYFCELYQVIKLSCSDTLINN. The helical transmembrane segment at 122 to 143 threads the bilayer; it reads ILVYTMTSTLGGVPLGGIIFSY. Residues 144 to 165 are Cytoplasmic-facing; the sequence is FKIISSILRMPSSGSRHRAFST. Residues 166–168 form a helical membrane-spanning segment; the sequence is CGS.

This sequence belongs to the G-protein coupled receptor 1 family. In terms of tissue distribution, tongue specific.

Its subcellular location is the cell membrane. In terms of biological role, possible taste receptor. This is Putative gustatory receptor clone PTE03 (Olr1145) from Rattus norvegicus (Rat).